Here is a 213-residue protein sequence, read N- to C-terminus: Uridine kinase (213 aa).

ATP is bound at residue 13 to 20 (GASASGKS).

The protein belongs to the uridine kinase family.

The protein localises to the cytoplasm. It carries out the reaction uridine + ATP = UMP + ADP + H(+). It catalyses the reaction cytidine + ATP = CMP + ADP + H(+). The protein operates within pyrimidine metabolism; CTP biosynthesis via salvage pathway; CTP from cytidine: step 1/3. It participates in pyrimidine metabolism; UMP biosynthesis via salvage pathway; UMP from uridine: step 1/1. This Haemophilus influenzae (strain PittEE) protein is Uridine kinase.